The chain runs to 55 residues: MAVPKRRMSRANTHSRRSQWKADNVALQHVKVQGQDVQIPRRLVKAAQLGLIDLD.

Over residues 1–19 the composition is skewed to basic residues; sequence MAVPKRRMSRANTHSRRSQ. Positions 1 to 20 are disordered; the sequence is MAVPKRRMSRANTHSRRSQW.

It belongs to the bacterial ribosomal protein bL32 family.

This is Large ribosomal subunit protein bL32 from Corynebacterium jeikeium (strain K411).